The primary structure comprises 241 residues: Phycocyanobilin:ferredoxin oxidoreductase (241 aa).

This sequence belongs to the HY2 family.

It carries out the reaction (2R,3Z)-phycocyanobilin + 4 oxidized [2Fe-2S]-[ferredoxin] = biliverdin IXalpha + 4 reduced [2Fe-2S]-[ferredoxin] + 4 H(+). Functionally, catalyzes the four-electron reduction of biliverdin IX-alpha (2-electron reduction at both the A and D rings); the reaction proceeds via an isolatable 2-electron intermediate, 181,182-dihydrobiliverdin. This chain is Phycocyanobilin:ferredoxin oxidoreductase, found in Prochlorococcus marinus (strain MIT 9515).